The following is a 73-amino-acid chain: Antimicrobial peptide lumbricin-PG (73 aa).

Residues 1 to 14 (MLLTISDFLFLSLT) form the signal peptide. The disordered stretch occupies residues 25–48 (RPWSDRKNNYSGPQFTYPPEKAPP).

It localises to the secreted. Functionally, displays antimicrobial activity against the Gram-positive bacterium S.aureus ATCC 2592, the Gram-negative bacteria E.coli ATCC 25922 and P.aeruginosa ATCC 27853, and the fungus C.albicans ATCC 2002. Displays stronger activity against P.aeruginosa and S.aureus than E.coli. Displays very weak hemolytic activity. The polypeptide is Antimicrobial peptide lumbricin-PG (Metaphire guillelmi (Earthworm)).